Reading from the N-terminus, the 53-residue chain is Large ribosomal subunit protein bL33 (53 aa).

Belongs to the bacterial ribosomal protein bL33 family.

This chain is Large ribosomal subunit protein bL33, found in Ureaplasma parvum serovar 3 (strain ATCC 27815 / 27 / NCTC 11736).